The primary structure comprises 479 residues: MPRFVDRVVIHTRAGSGGNGCASVHREKFKPLGGPDGGNGGRGGSVVFVVDPQVHTLLDFHFRPHVTAASGKQGMGSNRDGAAGADLEVKVPDGTVVLDDNGRLLADLVGAGTRFEAAAGGRGGLGNAALASRARKAPGFALLGEPGQARDLTLELKTVADVGLVGFPSAGKSSLVSVISAAKPKIADYPFTTLVPNLGVVAAGGHSFIVADVPGLIPGASQGRGLGLDFLRHIERCAVLVHVVDCATAEPGRDPISDIDALEAELAAYQPTLQGDAVLDDLAERPRAVVLNKIDVPEARELAEFVEDELAQRGWPVFLVSTVTRENLQPLIFGLWQMVSEYNAARPQAAPRRPVIRPVPVDDSGFDVQADGHGGFVVTGARPERWIGQTNFDNDEAVGYLADRLARLGVEEELLRLGAKPGCAVTIGEMTFDWEPQTPAGGHVAMSGRGTDVRLERSDRVGAAERKAARRQRRERDDD.

The Obg domain occupies 2 to 159; it reads PRFVDRVVIH…RDLTLELKTV (158 aa). Residues 160 to 340 enclose the OBG-type G domain; it reads ADVGLVGFPS…LIFGLWQMVS (181 aa). GTP contacts are provided by residues 166 to 173, 191 to 195, 212 to 215, 292 to 295, and 321 to 323; these read GFPSAGKS, FTTLV, DVPG, NKID, and STV. Mg(2+) is bound by residues Ser-173 and Thr-193. The region spanning 358–436 is the OCT domain; sequence PVPVDDSGFD…IGEMTFDWEP (79 aa). The disordered stretch occupies residues 438 to 479; that stretch reads TPAGGHVAMSGRGTDVRLERSDRVGAAERKAARRQRRERDDD. Positions 451–467 are enriched in basic and acidic residues; the sequence is TDVRLERSDRVGAAERK.

Belongs to the TRAFAC class OBG-HflX-like GTPase superfamily. OBG GTPase family. In terms of assembly, monomer. Requires Mg(2+) as cofactor.

Its subcellular location is the cytoplasm. Its function is as follows. An essential GTPase which binds GTP, GDP and possibly (p)ppGpp with moderate affinity, with high nucleotide exchange rates and a fairly low GTP hydrolysis rate. Plays a role in control of the cell cycle, stress response, ribosome biogenesis and in those bacteria that undergo differentiation, in morphogenesis control. The chain is GTPase Obg from Mycobacterium marinum (strain ATCC BAA-535 / M).